The following is a 190-amino-acid chain: Elongation factor P-like protein (190 aa).

This sequence belongs to the elongation factor P family.

This chain is Elongation factor P-like protein, found in Yersinia enterocolitica serotype O:8 / biotype 1B (strain NCTC 13174 / 8081).